Reading from the N-terminus, the 427-residue chain is Serine/threonine-protein kinase ssn3 (427 aa).

Positions 40–369 (YHIVGFISSG…AQEALEHPYF (330 aa)) constitute a Protein kinase domain. Residues 46 to 54 (ISSGTYGRV) and Lys-70 contribute to the ATP site. Asp-172 serves as the catalytic Proton acceptor. A compositionally biased stretch (basic and acidic residues) spans 390–399 (RRVTQDDNDI). The segment at 390–427 (RRVTQDDNDIRSGSLPGTKRSGLPDDSLLGRATKRLKE) is disordered.

This sequence belongs to the protein kinase superfamily. CMGC Ser/Thr protein kinase family. CDC2/CDKX subfamily. In terms of assembly, component of the srb8-11 complex, a regulatory module of the Mediator complex. Mg(2+) is required as a cofactor.

Its subcellular location is the nucleus. It catalyses the reaction L-seryl-[protein] + ATP = O-phospho-L-seryl-[protein] + ADP + H(+). It carries out the reaction L-threonyl-[protein] + ATP = O-phospho-L-threonyl-[protein] + ADP + H(+). The catalysed reaction is [DNA-directed RNA polymerase] + ATP = phospho-[DNA-directed RNA polymerase] + ADP + H(+). Component of the srb8-11 complex. The srb8-11 complex is a regulatory module of the Mediator complex which is itself involved in regulation of basal and activated RNA polymerase II-dependent transcription. The srb8-11 complex may be involved in the transcriptional repression of a subset of genes regulated by Mediator. It may inhibit the association of the Mediator complex with RNA polymerase II to form the holoenzyme complex. The srb8-11 complex phosphorylates the C-terminal domain (CTD) of the largest subunit of RNA polymerase II. The chain is Serine/threonine-protein kinase ssn3 (ssn3) from Aspergillus niger (strain ATCC MYA-4892 / CBS 513.88 / FGSC A1513).